Here is a 214-residue protein sequence, read N- to C-terminus: Adenylate kinase (214 aa).

Glycine 10 to threonine 15 contributes to the ATP binding site. Positions serine 30–valine 59 are NMP. AMP-binding positions include threonine 31, arginine 36, lysine 57–valine 59, glycine 85–arginine 88, and glutamine 92. Residues glycine 122–aspartate 159 form an LID region. Residues arginine 123 and serine 132–tyrosine 133 contribute to the ATP site. Positions 156 and 167 each coordinate AMP. An ATP-binding site is contributed by glutamine 200.

It belongs to the adenylate kinase family. As to quaternary structure, monomer.

Its subcellular location is the cytoplasm. It catalyses the reaction AMP + ATP = 2 ADP. Its pathway is purine metabolism; AMP biosynthesis via salvage pathway; AMP from ADP: step 1/1. Its function is as follows. Catalyzes the reversible transfer of the terminal phosphate group between ATP and AMP. Plays an important role in cellular energy homeostasis and in adenine nucleotide metabolism. It may be linked to the biosynthesis of lipopolysaccharide surface molecules, which are important for the pathogenesis of H.influenzae. This is Adenylate kinase from Haemophilus influenzae (strain ATCC 51907 / DSM 11121 / KW20 / Rd).